A 196-amino-acid polypeptide reads, in one-letter code: Probable thymidylate kinase (196 aa).

Residue 7–14 (GIDGAGKT) coordinates ATP.

Belongs to the thymidylate kinase family.

It catalyses the reaction dTMP + ATP = dTDP + ADP. The protein is Probable thymidylate kinase (tmk) of Archaeoglobus fulgidus (strain ATCC 49558 / DSM 4304 / JCM 9628 / NBRC 100126 / VC-16).